A 205-amino-acid chain; its full sequence is Recombination protein RecR (205 aa).

The segment at 60–75 adopts a C4-type zinc-finger fold; the sequence is CKVCHNISDTETCQIC. In terms of domain architecture, Toprim spans 83 to 178; sequence STVCVVENIR…KLSVIARGIS (96 aa).

It belongs to the RecR family.

Its function is as follows. May play a role in DNA repair. It seems to be involved in an RecBC-independent recombinational process of DNA repair. It may act with RecF and RecO. This Bacteroides thetaiotaomicron (strain ATCC 29148 / DSM 2079 / JCM 5827 / CCUG 10774 / NCTC 10582 / VPI-5482 / E50) protein is Recombination protein RecR.